A 75-amino-acid polypeptide reads, in one-letter code: MGSLQLTLVLFVLLSYVPPVRSGVNMYIKRIYDTCWKLKGICRNTCQKEEIYHIFCGIQSLCCLEKKEMPVLFVK.

The first 22 residues, 1 to 22, serve as a signal peptide directing secretion; it reads MGSLQLTLVLFVLLSYVPPVRS. Disulfide bonds link C35–C62, C42–C56, and C46–C63.

It belongs to the beta-defensin family.

It is found in the secreted. Functionally, has antibacterial activity. The sequence is that of Beta-defensin 30 (Defb30) from Mus musculus (Mouse).